A 306-amino-acid chain; its full sequence is Protein SULFUR DEFICIENCY-INDUCED 1 (306 aa).

5 TPR repeats span residues 1–22, 71–104, 107–140, 167–200, and 202–233; these read MERSLKKTKNNYNNSIKSNLMK, DSALKDMAVVMKQLDRSEEAIEAIKSFRPRCSKN, DSLDNVLIDLYKKCGRMEEQVELLKRKLRQIYQG, SRLLGNLGWAYMQQAKYLSAEAVYRKAQMVEPDA, and KSCNLAMCLIKQGRFEEGRLVLDDVLEYRVLG. Residues 72-139 adopt a coiled-coil conformation; the sequence is SALKDMAVVM…LKRKLRQIYQ (68 aa). A coiled-coil region spans residues 238–260; it reads RTRQRAEELLSELESSLPRMRDA. The TPR 6 repeat unit spans residues 270 to 304; the sequence is LDDDFVLGLEEMTSTSFKSKRLPIFEQISSFRNTL.

This sequence belongs to the MS5 protein family.

It localises to the nucleus. Involved in the utilization of stored sulfate under sulfur-deficient conditions. This is Protein SULFUR DEFICIENCY-INDUCED 1 from Arabidopsis thaliana (Mouse-ear cress).